A 95-amino-acid chain; its full sequence is Aspartyl/glutamyl-tRNA(Asn/Gln) amidotransferase subunit C (95 aa).

Residues P51 to E95 form a disordered region.

Belongs to the GatC family. As to quaternary structure, heterotrimer of A, B and C subunits.

The catalysed reaction is L-glutamyl-tRNA(Gln) + L-glutamine + ATP + H2O = L-glutaminyl-tRNA(Gln) + L-glutamate + ADP + phosphate + H(+). It carries out the reaction L-aspartyl-tRNA(Asn) + L-glutamine + ATP + H2O = L-asparaginyl-tRNA(Asn) + L-glutamate + ADP + phosphate + 2 H(+). Allows the formation of correctly charged Asn-tRNA(Asn) or Gln-tRNA(Gln) through the transamidation of misacylated Asp-tRNA(Asn) or Glu-tRNA(Gln) in organisms which lack either or both of asparaginyl-tRNA or glutaminyl-tRNA synthetases. The reaction takes place in the presence of glutamine and ATP through an activated phospho-Asp-tRNA(Asn) or phospho-Glu-tRNA(Gln). The chain is Aspartyl/glutamyl-tRNA(Asn/Gln) amidotransferase subunit C from Myxococcus xanthus (strain DK1622).